The following is a 481-amino-acid chain: Ras-GEF domain-containing family member 1A (481 aa).

The N-terminal Ras-GEF domain occupies 41–170 (QDGHLISGSL…AIAQMTQSLL (130 aa)). A Ras-GEF domain is found at 214–461 (DPLVLAQQLT…FVASFESEGP (248 aa)).

Detected in brain and spinal cord. Highly expressed in a number of intrahepatic cholangiocarcinoma tissue biopsies.

Functionally, guanine nucleotide exchange factor (GEF) with specificity for RAP2A, KRAS, HRAS, and NRAS (in vitro). Plays a role in cell migration. The polypeptide is Ras-GEF domain-containing family member 1A (RASGEF1A) (Homo sapiens (Human)).